We begin with the raw amino-acid sequence, 227 residues long: PKHD-type hydroxylase BamMC406_5004 (227 aa).

One can recognise a Fe2OG dioxygenase domain in the interval 80–179 (QVYPPLFNRY…RVASFFWVQS (100 aa)). Histidine 98, aspartate 100, and histidine 160 together coordinate Fe cation. Arginine 170 is a binding site for 2-oxoglutarate.

Fe(2+) serves as cofactor. L-ascorbate is required as a cofactor.

The chain is PKHD-type hydroxylase BamMC406_5004 from Burkholderia ambifaria (strain MC40-6).